Reading from the N-terminus, the 408-residue chain is Beta-ureidopropionase (408 aa).

In terms of domain architecture, CN hydrolase spans 90-360; it reads VRVGLIQNSI…DGLLISDMDL (271 aa). Glu-137 acts as the Proton acceptor in catalysis. Catalysis depends on Lys-212, which acts as the Proton donor. Residue Cys-249 is the Nucleophile of the active site.

Belongs to the carbon-nitrogen hydrolase superfamily. BUP family. In terms of assembly, homodimer, homotetramer, homooctamer; can also form higher homooligomers.

It is found in the cytoplasm. It catalyses the reaction 3-(carbamoylamino)propanoate + H2O + 2 H(+) = beta-alanine + NH4(+) + CO2. The catalysed reaction is 3-(carbamoylamino)-2-methylpropanoate + H2O + 2 H(+) = (R)-3-amino-2-methylpropanoate + NH4(+) + CO2. It functions in the pathway amino-acid biosynthesis; beta-alanine biosynthesis. In terms of biological role, catalyzes a late step in pyrimidine degradation. Converts N-carbamoyl-beta-aminoisobutyrate and N-carbamoyl-beta-alanine (3-ureidopropanoate) to, respectively, beta-aminoisobutyrate and beta-alanine, ammonia and carbon dioxide. Involved in the recycling of nitrogen from nucleobases to general nitrogen metabolism. The protein is Beta-ureidopropionase of Arabidopsis thaliana (Mouse-ear cress).